The primary structure comprises 300 residues: Iron-dependent extradiol dioxygenase (300 aa).

2 VOC domains span residues 5 to 120 (SLAY…AFHG) and 142 to 270 (GLGH…FGCE). A Fe cation-binding site is contributed by H145. Residues H200, H215, D250, and Y256 each contribute to the substrate site. Position 215 (H215) interacts with Fe cation. E266 is a binding site for Fe cation.

The protein belongs to the extradiol ring-cleavage dioxygenase family. As to quaternary structure, homodimer. The cofactor is Fe(2+).

It carries out the reaction 3,4-dihydroxy-9,10-secoandrosta-1,3,5(10)-triene-9,17-dione + O2 = (1E,2Z)-3-hydroxy-5,9,17-trioxo-4,5:9,10-disecoandrosta-1(10),2-dien-4-oate + H(+). The protein operates within steroid metabolism; cholesterol metabolism. In terms of biological role, catalyzes the meta-cleavage of 3,4-dihydroxy-9,10-seconandrost-1,3,5(10)-triene-9,17-dione (3,4-DHSA) to produce 4,5-9,10-diseco-3-hydroxy-5,9,17-trioxoandrosta-1(10),2-diene-4-oic acid (4,9-DSHA). Also involved in biphenyl and polychlorinated biphenyls (PCBs) degradation. This chain is Iron-dependent extradiol dioxygenase (hsaC), found in Rhodococcus jostii (strain RHA1).